The chain runs to 347 residues: Quinolinate synthase (347 aa).

Positions 47 and 68 each coordinate iminosuccinate. C113 is a [4Fe-4S] cluster binding site. Residues 139 to 141 and S156 each bind iminosuccinate; that span reads YAN. A [4Fe-4S] cluster-binding site is contributed by C200. Residues 226–228 and T243 each bind iminosuccinate; that span reads HPE. C297 is a binding site for [4Fe-4S] cluster.

Belongs to the quinolinate synthase family. Type 1 subfamily. [4Fe-4S] cluster serves as cofactor.

It localises to the cytoplasm. The enzyme catalyses iminosuccinate + dihydroxyacetone phosphate = quinolinate + phosphate + 2 H2O + H(+). The protein operates within cofactor biosynthesis; NAD(+) biosynthesis; quinolinate from iminoaspartate: step 1/1. In terms of biological role, catalyzes the condensation of iminoaspartate with dihydroxyacetone phosphate to form quinolinate. The sequence is that of Quinolinate synthase from Shigella boydii serotype 18 (strain CDC 3083-94 / BS512).